The chain runs to 307 residues: Ribonuclease Z (307 aa).

Zn(2+) contacts are provided by His63, His65, Asp67, His68, His143, Asp213, and His271. Catalysis depends on Asp67, which acts as the Proton acceptor.

This sequence belongs to the RNase Z family. Homodimer. Requires Zn(2+) as cofactor.

The catalysed reaction is Endonucleolytic cleavage of RNA, removing extra 3' nucleotides from tRNA precursor, generating 3' termini of tRNAs. A 3'-hydroxy group is left at the tRNA terminus and a 5'-phosphoryl group is left at the trailer molecule.. Its function is as follows. Zinc phosphodiesterase, which displays some tRNA 3'-processing endonuclease activity. Probably involved in tRNA maturation, by removing a 3'-trailer from precursor tRNA. The chain is Ribonuclease Z from Lactococcus lactis subsp. cremoris (strain MG1363).